Reading from the N-terminus, the 260-residue chain is Adenosylcobinamide-GDP ribazoletransferase (260 aa).

Transmembrane regions (helical) follow at residues 31 to 51 (IIFFPFIGFLEGVFCIFLVNI), 55 to 75 (IFSSSVISIILLVFLFSVRGI), 111 to 131 (VIGVAGAVALVLDVLCRFAFV), 140 to 160 (FLIFLFMFCFSRWIVIPLMYY), 177 to 197 (ISSWQVIISTVLPIFLLVYFT), 202 to 222 (FIFLPLIALFLFFISYILKKF), and 234 to 254 (HLGATVEITEIVFLICFLLGE).

This sequence belongs to the CobS family. It depends on Mg(2+) as a cofactor.

It is found in the cell inner membrane. It carries out the reaction alpha-ribazole + adenosylcob(III)inamide-GDP = adenosylcob(III)alamin + GMP + H(+). The catalysed reaction is alpha-ribazole 5'-phosphate + adenosylcob(III)inamide-GDP = adenosylcob(III)alamin 5'-phosphate + GMP + H(+). It participates in cofactor biosynthesis; adenosylcobalamin biosynthesis; adenosylcobalamin from cob(II)yrinate a,c-diamide: step 7/7. Joins adenosylcobinamide-GDP and alpha-ribazole to generate adenosylcobalamin (Ado-cobalamin). Also synthesizes adenosylcobalamin 5'-phosphate from adenosylcobinamide-GDP and alpha-ribazole 5'-phosphate. The sequence is that of Adenosylcobinamide-GDP ribazoletransferase from Thermodesulfovibrio yellowstonii (strain ATCC 51303 / DSM 11347 / YP87).